We begin with the raw amino-acid sequence, 233 residues long: 2,3,4,5-tetrahydropyridine-2,6-dicarboxylate N-acetyltransferase (233 aa).

Belongs to the transferase hexapeptide repeat family. DapH subfamily.

The enzyme catalyses (S)-2,3,4,5-tetrahydrodipicolinate + acetyl-CoA + H2O = L-2-acetamido-6-oxoheptanedioate + CoA. It functions in the pathway amino-acid biosynthesis; L-lysine biosynthesis via DAP pathway; LL-2,6-diaminopimelate from (S)-tetrahydrodipicolinate (acetylase route): step 1/3. Functionally, catalyzes the transfer of an acetyl group from acetyl-CoA to tetrahydrodipicolinate. The protein is 2,3,4,5-tetrahydropyridine-2,6-dicarboxylate N-acetyltransferase of Enterococcus faecalis (strain ATCC 700802 / V583).